Here is a 155-residue protein sequence, read N- to C-terminus: Small ribosomal subunit protein uS7 (155 aa).

This sequence belongs to the universal ribosomal protein uS7 family. Part of the 30S ribosomal subunit. Contacts proteins S9 and S11.

Its function is as follows. One of the primary rRNA binding proteins, it binds directly to 16S rRNA where it nucleates assembly of the head domain of the 30S subunit. Is located at the subunit interface close to the decoding center, probably blocks exit of the E-site tRNA. The polypeptide is Small ribosomal subunit protein uS7 (Thermotoga maritima (strain ATCC 43589 / DSM 3109 / JCM 10099 / NBRC 100826 / MSB8)).